A 227-amino-acid polypeptide reads, in one-letter code: Translation initiation factor 6 (227 aa).

The protein belongs to the eIF-6 family.

In terms of biological role, binds to the 50S ribosomal subunit and prevents its association with the 30S ribosomal subunit to form the 70S initiation complex. This chain is Translation initiation factor 6, found in Pyrococcus abyssi (strain GE5 / Orsay).